The following is a 723-amino-acid chain: Transient receptor potential cation channel subfamily V member 5 (723 aa).

Residues 1–320 (MGVKKPWIQL…SLKWKKYGQP (320 aa)) are Cytoplasmic-facing. ANK repeat units lie at residues 72-101 (LGET…YLVT), 110-139 (VGQT…SASA), 156-185 (YGEH…DIRA), 189-222 (LGNT…GDHL), and 232-261 (QGLT…HIQW). A helical transmembrane segment spans residues 321-341 (YFCLLGMLYIFYMICFTTCCV). Residues 342 to 378 (YRPLKFRDANRTHVRDNTVLEQKPLQEAYVTYQDKVR) are Extracellular-facing. A glycan (N-linked (GlcNAc...) asparagine) is linked at N351. The helical transmembrane segment at 379–401 (LVGELVTVIGAVVILLIEIPDIF) threads the bilayer. The Cytoplasmic segment spans residues 402 to 412 (RVGASRYFGHT). The chain crosses the membrane as a helical span at residues 413–435 (VLGGPFHVIIITYASLVLLIMVM). Residues 436-441 (RLTSMN) lie on the Extracellular side of the membrane. A helical membrane pass occupies residues 442 to 462 (GEVVPISMALVLGWCSVMYFS). Residues 463–485 (RGFQMLGPFTIMIQKMIFGDLLR) are Cytoplasmic-facing. The helical transmembrane segment at 486–506 (FCWLMAMVILGFASAFYIIFQ) threads the bilayer. Residues 517 to 537 (SDYPTAMFSTFELFLTIIDGP) constitute an intramembrane region (pore-forming). Residue D535 participates in Ca(2+) binding. Residues 550–570 (LTYFAFAIIATLLMLNLFIAM) traverse the membrane as a helical segment. Residues 571–723 (MGDTHWRVAQ…EGDGEEIYHF (153 aa)) lie on the Cytoplasmic side of the membrane. The interaction with S100A10 stretch occupies residues 591–595 (VATTV). Residues 643-646 (AFKS) form an involved in Ca(2+)-dependent inactivation region. Residues 651 to 674 (EVQEQLSEKQPSGTETGTLARGSV) are disordered. Positions 654–667 (EQLSEKQPSGTETG) are enriched in polar residues. T678 is subject to Phosphothreonine. Position 682 is a phosphoserine (S682). Residues 693–723 (RGWEILRRNTLGHLNLGQDLGEGDGEEIYHF) are involved in Ca(2+)-dependent inactivation.

This sequence belongs to the transient receptor (TC 1.A.4) family. TrpV subfamily. TRPV5 sub-subfamily. As to quaternary structure, homotetramer and probably heterotetramer with TRPV6. Interacts with TRPV6. Interacts with S100A10 and probably with the ANAX2-S100A10 heterotetramer. The interaction with S100A10 is required for the trafficking to the plasma membrane. Interacts with calmodulin. Interacts with BSPRY, which results in its inactivation. In terms of processing, glycosylated. In terms of tissue distribution, detected in kidney (at protein level). Detected in kidney.

It localises to the cell membrane. It is found in the apical cell membrane. The catalysed reaction is Ca(2+)(in) = Ca(2+)(out). With respect to regulation, activated by WNK3. Its function is as follows. Constitutively active calcium selective cation channel thought to be involved in Ca(2+) reabsorption in kidney and intestine. Required for normal Ca(2+) reabsorption in the kidney distal convoluted tubules. The channel is activated by low internal calcium level and the current exhibits an inward rectification. A Ca(2+)-dependent feedback regulation includes fast channel inactivation and slow current decay. Heteromeric assembly with TRPV6 seems to modify channel properties. TRPV5-TRPV6 heteromultimeric concatemers exhibit voltage-dependent gating. In Rattus norvegicus (Rat), this protein is Transient receptor potential cation channel subfamily V member 5 (Trpv5).